A 224-amino-acid chain; its full sequence is Glycerol-3-phosphate acyltransferase (224 aa).

6 helical membrane passes run 14-34 (INMI…GWLL), 70-90 (YLSI…VLGA), 99-119 (TQWS…YLGF), 129-149 (IGSV…IWGI), 162-182 (LIGV…LPLP), and 185-205 (ISII…LFIF).

This sequence belongs to the PlsY family. Probably interacts with PlsX.

The protein resides in the cell inner membrane. The enzyme catalyses an acyl phosphate + sn-glycerol 3-phosphate = a 1-acyl-sn-glycero-3-phosphate + phosphate. The protein operates within lipid metabolism; phospholipid metabolism. Its function is as follows. Catalyzes the transfer of an acyl group from acyl-phosphate (acyl-PO(4)) to glycerol-3-phosphate (G3P) to form lysophosphatidic acid (LPA). This enzyme utilizes acyl-phosphate as fatty acyl donor, but not acyl-CoA or acyl-ACP. This Helicobacter hepaticus (strain ATCC 51449 / 3B1) protein is Glycerol-3-phosphate acyltransferase.